Reading from the N-terminus, the 339-residue chain is Protein-arginine kinase (339 aa).

In terms of domain architecture, Phosphagen kinase C-terminal spans 14–242 (IVINSNISLS…LNVISEEKKF (229 aa)). ATP contacts are provided by residues 17 to 21 (NSNIS), 164 to 168 (RASVN), and 195 to 200 (KGLYEE).

Belongs to the ATP:guanido phosphotransferase family.

The enzyme catalyses L-arginyl-[protein] + ATP = N(omega)-phospho-L-arginyl-[protein] + ADP + H(+). In terms of biological role, catalyzes the specific phosphorylation of arginine residues in proteins. In Clostridium botulinum (strain Eklund 17B / Type B), this protein is Protein-arginine kinase.